Consider the following 300-residue polypeptide: Cation-efflux pump FieF (300 aa).

Helical transmembrane passes span 12-32 (AAIA…FAWW), 39-59 (ILAA…NLLV), 82-102 (AALA…LTSI), and 114-134 (PGVG…LVTF). Residues D45 and D49 each coordinate Zn(2+). H153 and D157 together coordinate Zn(2+). Transmembrane regions (helical) follow at residues 156 to 176 (SDVM…YGWH) and 178 to 198 (ADAL…LRMG).

It belongs to the cation diffusion facilitator (CDF) transporter (TC 2.A.4) family. FieF subfamily. As to quaternary structure, homodimer.

The protein localises to the cell inner membrane. It catalyses the reaction Zn(2+)(in) + H(+)(out) = Zn(2+)(out) + H(+)(in). It carries out the reaction Cd(2+)(in) + H(+)(out) = Cd(2+)(out) + H(+)(in). The catalysed reaction is Fe(2+)(in) + H(+)(out) = Fe(2+)(out) + H(+)(in). Its function is as follows. Divalent metal cation transporter which exports Zn(2+), Cd(2+) and possibly Fe(2+). May be involved in zinc and iron detoxification by efflux. The chain is Cation-efflux pump FieF from Salmonella arizonae (strain ATCC BAA-731 / CDC346-86 / RSK2980).